The following is a 173-amino-acid chain: Small ribosomal subunit protein uS5 (173 aa).

In terms of domain architecture, S5 DRBM spans 17–80 (WQERVIQIRR…ADGKKQLIDV (64 aa)).

It belongs to the universal ribosomal protein uS5 family. Part of the 30S ribosomal subunit. Contacts proteins S4 and S8.

In terms of biological role, with S4 and S12 plays an important role in translational accuracy. Functionally, located at the back of the 30S subunit body where it stabilizes the conformation of the head with respect to the body. This is Small ribosomal subunit protein uS5 from Crocosphaera subtropica (strain ATCC 51142 / BH68) (Cyanothece sp. (strain ATCC 51142)).